We begin with the raw amino-acid sequence, 80 residues long: Acyl carrier protein (80 aa).

Residues 4–79 (QEIFEKVKAV…DAVEYIKAKL (76 aa)) form the Carrier domain. An O-(pantetheine 4'-phosphoryl)serine modification is found at S39.

The protein belongs to the acyl carrier protein (ACP) family. 4'-phosphopantetheine is transferred from CoA to a specific serine of apo-ACP by AcpS. This modification is essential for activity because fatty acids are bound in thioester linkage to the sulfhydryl of the prosthetic group.

The protein localises to the cytoplasm. It functions in the pathway lipid metabolism; fatty acid biosynthesis. Carrier of the growing fatty acid chain in fatty acid biosynthesis. This Thermus thermophilus (strain ATCC BAA-163 / DSM 7039 / HB27) protein is Acyl carrier protein.